A 310-amino-acid chain; its full sequence is tRNA dimethylallyltransferase (310 aa).

An ATP-binding site is contributed by 5 to 12 (GPTASGKS). Substrate is bound at residue 7–12 (TASGKS). An interaction with substrate tRNA region spans residues 30–33 (DSMQ).

It belongs to the IPP transferase family. Monomer. It depends on Mg(2+) as a cofactor.

It catalyses the reaction adenosine(37) in tRNA + dimethylallyl diphosphate = N(6)-dimethylallyladenosine(37) in tRNA + diphosphate. Its function is as follows. Catalyzes the transfer of a dimethylallyl group onto the adenine at position 37 in tRNAs that read codons beginning with uridine, leading to the formation of N6-(dimethylallyl)adenosine (i(6)A). In Rhodopseudomonas palustris (strain HaA2), this protein is tRNA dimethylallyltransferase.